The sequence spans 310 residues: Porphobilinogen deaminase (310 aa).

S-(dipyrrolylmethanemethyl)cysteine is present on cysteine 243.

The protein belongs to the HMBS family. As to quaternary structure, monomer. Dipyrromethane serves as cofactor.

It carries out the reaction 4 porphobilinogen + H2O = hydroxymethylbilane + 4 NH4(+). The protein operates within porphyrin-containing compound metabolism; protoporphyrin-IX biosynthesis; coproporphyrinogen-III from 5-aminolevulinate: step 2/4. Tetrapolymerization of the monopyrrole PBG into the hydroxymethylbilane pre-uroporphyrinogen in several discrete steps. This is Porphobilinogen deaminase from Mannheimia succiniciproducens (strain KCTC 0769BP / MBEL55E).